The following is a 216-amino-acid chain: Uracil phosphoribosyltransferase (216 aa).

30 to 34 serves as a coordination point for GTP; it reads KTLVR. Residues Arg-80, Arg-105, and 140–148 contribute to the 5-phospho-alpha-D-ribose 1-diphosphate site; that span reads DPMIATAST. Residues Ile-203 and 208–210 each bind uracil; that span reads GDA. Asp-209 serves as a coordination point for 5-phospho-alpha-D-ribose 1-diphosphate.

It belongs to the UPRTase family. Requires Mg(2+) as cofactor.

It catalyses the reaction UMP + diphosphate = 5-phospho-alpha-D-ribose 1-diphosphate + uracil. It participates in pyrimidine metabolism; UMP biosynthesis via salvage pathway; UMP from uracil: step 1/1. Its activity is regulated as follows. Allosterically activated by GTP. Its function is as follows. Catalyzes the conversion of uracil and 5-phospho-alpha-D-ribose 1-diphosphate (PRPP) to UMP and diphosphate. The polypeptide is Uracil phosphoribosyltransferase (Sulfurisphaera tokodaii (strain DSM 16993 / JCM 10545 / NBRC 100140 / 7) (Sulfolobus tokodaii)).